The sequence spans 1061 residues: TonB-dependent transporter Oar (1061 aa).

An N-terminal signal peptide occupies residues Met1–Ala26. The 123-residue stretch at Glu121–Arg243 folds into the TBDR plug domain. The TBDR beta-barrel domain maps to Glu248–Phe1061. The segment at Arg701–Gln722 is disordered. The segment covering Gly709–Gln722 has biased composition (polar residues).

Belongs to the TonB-dependent receptor family. In terms of assembly, interacts with TonB. Part of a transport system composed of the outer membrane transporter Oar, the trans-periplasmic binding protein TonB and the inner membrane proteins ExbB and ExbD.

It is found in the cell outer membrane. Its function is as follows. Required for secretion of the protease PopC across the bacterial outer membrane. Binds and probably transports PopC from the periplasm to the extracellular milieu. It derives its energy for transport by interacting with the trans-periplasmic membrane protein TonB. Required for cellular adhesion during fruiting body formation, a multicellular developmental program that is induced in response to starvation. This Myxococcus xanthus protein is TonB-dependent transporter Oar.